The chain runs to 339 residues: Cathepsin B (339 aa).

Positions 1 to 17 (MWWSLIPLSCLLALTSA) are cleaved as a signal peptide. Residues 18-79 (HDKPSSHPLS…ERVGFSEDIN (62 aa)) constitute a propeptide, activation peptide. 6 cysteine pairs are disulfide-bonded: Cys93–Cys122, Cys105–Cys150, Cys141–Cys207, Cys142–Cys146, Cys179–Cys211, and Cys187–Cys198. The active site involves Cys108. An N-linked (GlcNAc...) asparagine glycan is attached at Asn192. Lys220 carries the post-translational modification N6-acetyllysine. Catalysis depends on residues His278 and Asn298. Positions 334–339 (QYWGRF) are excised as a propeptide.

The protein belongs to the peptidase C1 family. As to quaternary structure, dimer of a heavy chain and a light chain cross-linked by a disulfide bond. Interacts with SRPX2. Directly interacts with SHKBP1. Expressed in the epithelial cells of the prostate and mammary gland.

Its subcellular location is the lysosome. It localises to the melanosome. It is found in the secreted. The protein localises to the extracellular space. The protein resides in the apical cell membrane. It carries out the reaction Hydrolysis of proteins with broad specificity for peptide bonds. Preferentially cleaves -Arg-Arg-|-Xaa bonds in small molecule substrates (thus differing from cathepsin L). In addition to being an endopeptidase, shows peptidyl-dipeptidase activity, liberating C-terminal dipeptides.. Its function is as follows. Thiol protease which is believed to participate in intracellular degradation and turnover of proteins. Cleaves matrix extracellular phosphoglycoprotein MEPE. Involved in the solubilization of cross-linked TG/thyroglobulin in the thyroid follicle lumen. Has also been implicated in tumor invasion and metastasis. This is Cathepsin B (Ctsb) from Rattus norvegicus (Rat).